Reading from the N-terminus, the 560-residue chain is Oxygen-dependent choline dehydrogenase 1 (560 aa).

8-37 (DYIIIGAGSAGNVLATRLTEDPDVQVLLLE) serves as a coordination point for FAD. H475 serves as the catalytic Proton acceptor.

It belongs to the GMC oxidoreductase family. FAD is required as a cofactor.

It catalyses the reaction choline + A = betaine aldehyde + AH2. It carries out the reaction betaine aldehyde + NAD(+) + H2O = glycine betaine + NADH + 2 H(+). It functions in the pathway amine and polyamine biosynthesis; betaine biosynthesis via choline pathway; betaine aldehyde from choline (cytochrome c reductase route): step 1/1. In terms of biological role, involved in the biosynthesis of the osmoprotectant glycine betaine. Catalyzes the oxidation of choline to betaine aldehyde and betaine aldehyde to glycine betaine at the same rate. This chain is Oxygen-dependent choline dehydrogenase 1, found in Chromohalobacter salexigens (strain ATCC BAA-138 / DSM 3043 / CIP 106854 / NCIMB 13768 / 1H11).